We begin with the raw amino-acid sequence, 617 residues long: RNA polymerase sigma factor RpoD (617 aa).

The segment at 192 to 222 (NITNDSNENEDENEDENEDEDENSIDPELAN) is disordered. Positions 198-216 (NENEDENEDENEDEDENSI) are enriched in acidic residues. Positions 383 to 453 (MVEANLRLVI…TRSIADQART (71 aa)) are sigma-70 factor domain-2. An Interaction with polymerase core subunit RpoC motif is present at residues 407 to 410 (DLIQ). Residues 462-538 (ETINKLNRIS…DTTLELPLDS (77 aa)) are sigma-70 factor domain-3. The tract at residues 551-604 (VLSGLTAREAKVLRMRFGIDMNTDHTLEEVGKQFDVTRERIRQIEAKALRKLRH) is sigma-70 factor domain-4. Positions 577-596 (LEEVGKQFDVTRERIRQIEA) form a DNA-binding region, H-T-H motif.

The protein belongs to the sigma-70 factor family. RpoD/SigA subfamily. As to quaternary structure, interacts transiently with the RNA polymerase catalytic core.

Its subcellular location is the cytoplasm. In terms of biological role, sigma factors are initiation factors that promote the attachment of RNA polymerase to specific initiation sites and are then released. This sigma factor is the primary sigma factor during exponential growth. This chain is RNA polymerase sigma factor RpoD, found in Buchnera aphidicola subsp. Schizaphis graminum (strain Sg).